The sequence spans 262 residues: Large ribosomal subunit protein bL9m (262 aa).

A mitochondrion-targeting transit peptide spans 1–49; it reads MAASMAPRCSSLLWAGAAWLRQRGIGELLQPRIERSTPGRDFSLSHYQS.

The protein belongs to the bacterial ribosomal protein bL9 family. As to quaternary structure, component of the mitochondrial ribosome large subunit (39S) which comprises a 16S rRNA and about 50 distinct proteins.

The protein resides in the mitochondrion. The polypeptide is Large ribosomal subunit protein bL9m (Mrpl9) (Rattus norvegicus (Rat)).